The following is an 837-amino-acid chain: V-type proton ATPase 116 kDa subunit a 1 (837 aa).

Residues M1–E388 lie on the Cytoplasmic side of the membrane. 2 positions are modified to phosphothreonine: T250 and T360. Y364 carries the phosphotyrosine modification. Residues I389–F407 traverse the membrane as a helical segment. At G408 to D409 the chain is on the vacuolar side. The helical transmembrane segment at F410–R426 threads the bilayer. At E427–S441 the chain is on the cytoplasmic side. Residues T442–S471 traverse the membrane as a helical segment. Over L472–S534 the chain is Vacuolar. Residues F535–L554 form a helical membrane-spanning segment. The Cytoplasmic segment spans residues S555–F572. The helical transmembrane segment at I573–K593 threads the bilayer. The Vacuolar portion of the chain corresponds to W594–F638. A helical membrane pass occupies residues L639–L658. The Cytoplasmic segment spans residues R659 to T724. A helical transmembrane segment spans residues I725–A749. Residues Q750–A770 lie on the Vacuolar side of the membrane. The helical transmembrane segment at G771–E809 threads the bilayer. The Cytoplasmic segment spans residues F810 to E837.

Belongs to the V-ATPase 116 kDa subunit family. V-ATPase is a heteromultimeric enzyme made up of two complexes: the ATP-hydrolytic V1 complex and the proton translocation V0 complex. The V1 complex consists of three catalytic AB heterodimers that form a heterohexamer, three peripheral stalks each consisting of EG heterodimers, one central rotor including subunits D and F, and the regulatory subunits C and H. The proton translocation complex V0 consists of the proton transport subunit a, a ring of proteolipid subunits c9c'', rotary subunit d, subunits e and f, and the accessory subunits ATP6AP1/Ac45 and ATP6AP2/PRR. Interacts with SPAAR.

It localises to the cytoplasmic vesicle. It is found in the clathrin-coated vesicle membrane. The protein localises to the secretory vesicle. The protein resides in the synaptic vesicle membrane. Its subcellular location is the melanosome. Its function is as follows. Subunit of the V0 complex of vacuolar(H+)-ATPase (V-ATPase), a multisubunit enzyme composed of a peripheral complex (V1) that hydrolyzes ATP and a membrane integral complex (V0) that translocates protons. V-ATPase is responsible for the acidification of various organelles, such as lysosomes, endosomes, the trans-Golgi network, and secretory granules, including synaptic vesicles. In certain cell types, can be exported to the plasma membrane, where it is involved in the acidification of the extracellular environment. Required for assembly and activity of the vacuolar ATPase. Through its action on compartment acidification, plays an essential role in neuronal development in terms of integrity and connectivity of neurons. The polypeptide is V-type proton ATPase 116 kDa subunit a 1 (ATP6V0A1) (Pongo abelii (Sumatran orangutan)).